The sequence spans 389 residues: Lipid-A-disaccharide synthase (389 aa).

It belongs to the LpxB family.

It catalyses the reaction a lipid X + a UDP-2-N,3-O-bis[(3R)-3-hydroxyacyl]-alpha-D-glucosamine = a lipid A disaccharide + UDP + H(+). It participates in bacterial outer membrane biogenesis; LPS lipid A biosynthesis. Condensation of UDP-2,3-diacylglucosamine and 2,3-diacylglucosamine-1-phosphate to form lipid A disaccharide, a precursor of lipid A, a phosphorylated glycolipid that anchors the lipopolysaccharide to the outer membrane of the cell. The chain is Lipid-A-disaccharide synthase from Albidiferax ferrireducens (strain ATCC BAA-621 / DSM 15236 / T118) (Rhodoferax ferrireducens).